Consider the following 144-residue polypeptide: Bacilliredoxin BCE33L1972 (144 aa).

The protein belongs to the bacilliredoxin family.

This is Bacilliredoxin BCE33L1972 from Bacillus cereus (strain ZK / E33L).